A 399-amino-acid polypeptide reads, in one-letter code: Elongation factor Tu (399 aa).

In terms of domain architecture, tr-type G spans 10-209 (KPHVNIGTIG…EVDAYIPTPV (200 aa)). The G1 stretch occupies residues 19-26 (GHVDHGKT). Residue 19–26 (GHVDHGKT) coordinates GTP. Thr26 contacts Mg(2+). Residues 60–64 (GITIA) form a G2 region. The segment at 81-84 (DCPG) is G3. Residues 81–85 (DCPGH) and 136–139 (NKQD) each bind GTP. Residues 136–139 (NKQD) are G4. The tract at residues 174–176 (SAL) is G5.

It belongs to the TRAFAC class translation factor GTPase superfamily. Classic translation factor GTPase family. EF-Tu/EF-1A subfamily. In terms of assembly, monomer.

The protein resides in the cytoplasm. It carries out the reaction GTP + H2O = GDP + phosphate + H(+). Functionally, GTP hydrolase that promotes the GTP-dependent binding of aminoacyl-tRNA to the A-site of ribosomes during protein biosynthesis. The protein is Elongation factor Tu of Helicobacter acinonychis (strain Sheeba).